A 215-amino-acid polypeptide reads, in one-letter code: Uridine kinase (215 aa).

16 to 23 (GASASGKS) provides a ligand contact to ATP.

The protein belongs to the uridine kinase family.

The protein localises to the cytoplasm. It catalyses the reaction uridine + ATP = UMP + ADP + H(+). The catalysed reaction is cytidine + ATP = CMP + ADP + H(+). Its pathway is pyrimidine metabolism; CTP biosynthesis via salvage pathway; CTP from cytidine: step 1/3. The protein operates within pyrimidine metabolism; UMP biosynthesis via salvage pathway; UMP from uridine: step 1/1. The sequence is that of Uridine kinase from Aliivibrio fischeri (strain ATCC 700601 / ES114) (Vibrio fischeri).